We begin with the raw amino-acid sequence, 69 residues long: Sec-independent protein translocase protein TatA (69 aa).

Residues 1 to 21 (MGSLSIWHWLIVLAIALLLFG) form a helical membrane-spanning segment. Residues 41-69 (KGMNDDEETPPPAQSTTSRTVEHKADESK) are disordered. A compositionally biased stretch (basic and acidic residues) spans 60–69 (TVEHKADESK).

It belongs to the TatA/E family. The Tat system comprises two distinct complexes: a TatABC complex, containing multiple copies of TatA, TatB and TatC subunits, and a separate TatA complex, containing only TatA subunits. Substrates initially bind to the TatABC complex, which probably triggers association of the separate TatA complex to form the active translocon.

The protein localises to the cell inner membrane. Part of the twin-arginine translocation (Tat) system that transports large folded proteins containing a characteristic twin-arginine motif in their signal peptide across membranes. TatA could form the protein-conducting channel of the Tat system. The protein is Sec-independent protein translocase protein TatA of Rhizobium rhizogenes (strain K84 / ATCC BAA-868) (Agrobacterium radiobacter).